Consider the following 204-residue polypeptide: Leucyl/phenylalanyl-tRNA--protein transferase (204 aa).

The protein belongs to the L/F-transferase family.

It localises to the cytoplasm. The enzyme catalyses N-terminal L-lysyl-[protein] + L-leucyl-tRNA(Leu) = N-terminal L-leucyl-L-lysyl-[protein] + tRNA(Leu) + H(+). It catalyses the reaction N-terminal L-arginyl-[protein] + L-leucyl-tRNA(Leu) = N-terminal L-leucyl-L-arginyl-[protein] + tRNA(Leu) + H(+). It carries out the reaction L-phenylalanyl-tRNA(Phe) + an N-terminal L-alpha-aminoacyl-[protein] = an N-terminal L-phenylalanyl-L-alpha-aminoacyl-[protein] + tRNA(Phe). Functionally, functions in the N-end rule pathway of protein degradation where it conjugates Leu, Phe and, less efficiently, Met from aminoacyl-tRNAs to the N-termini of proteins containing an N-terminal arginine or lysine. The polypeptide is Leucyl/phenylalanyl-tRNA--protein transferase (Brucella anthropi (strain ATCC 49188 / DSM 6882 / CCUG 24695 / JCM 21032 / LMG 3331 / NBRC 15819 / NCTC 12168 / Alc 37) (Ochrobactrum anthropi)).